The sequence spans 249 residues: Proteasome subunit alpha type-3 (249 aa).

The protein belongs to the peptidase T1A family. As to quaternary structure, the 26S proteasome consists of a 20S proteasome core and two 19S regulatory subunits. The 20S proteasome core is composed of 28 subunits that are arranged in four stacked rings, resulting in a barrel-shaped structure. The two end rings are each formed by seven alpha subunits, and the two central rings are each formed by seven beta subunits. The catalytic chamber with the active sites is on the inside of the barrel.

The protein resides in the cytoplasm. It is found in the nucleus. Its function is as follows. The proteasome is a multicatalytic proteinase complex which is characterized by its ability to cleave peptides with Arg, Phe, Tyr, Leu, and Glu adjacent to the leaving group at neutral or slightly basic pH. The proteasome has an ATP-dependent proteolytic activity. The protein is Proteasome subunit alpha type-3 (PAG1) of Spinacia oleracea (Spinach).